A 313-amino-acid chain; its full sequence is Monoglyceride lipase (313 aa).

The GXSXG motif lies at 121 to 125 (GHSMG). The Nucleophile role is filled by Ser123. Active-site charge relay system residues include Asp251 and His281.

Belongs to the AB hydrolase superfamily. Monoacylglycerol lipase family.

It localises to the lipid droplet. Its subcellular location is the cytoplasm. The protein localises to the endoplasmic reticulum. It is found in the mitochondrion outer membrane. The catalysed reaction is Hydrolyzes glycerol monoesters of long-chain fatty acids.. It carries out the reaction a fatty acid ethyl ester + H2O = ethanol + a fatty acid + H(+). The enzyme catalyses 1-(9Z-octadecenoyl)-glycerol + H2O = glycerol + (9Z)-octadecenoate + H(+). It catalyses the reaction 2-(9Z-octadecenoyl)-glycerol + H2O = glycerol + (9Z)-octadecenoate + H(+). The catalysed reaction is 1-hexadecanoylglycerol + H2O = glycerol + hexadecanoate + H(+). It carries out the reaction 2-hexadecanoylglycerol + H2O = glycerol + hexadecanoate + H(+). The enzyme catalyses ethyl hexadecanoate + H2O = ethanol + hexadecanoate + H(+). It catalyses the reaction ethyl (9Z)-octadecenoate + H2O = ethanol + (9Z)-octadecenoate + H(+). The catalysed reaction is ethyl (9Z)-hexadecenoate + H2O = (9Z)-hexadecenoate + ethanol + H(+). It carries out the reaction ethyl octadecanoate + H2O = ethanol + octadecanoate + H(+). The protein operates within glycerolipid metabolism; triacylglycerol degradation. Functionally, converts monoacylglycerides (MAG) to free fatty acids and glycerol. Has a strong preference for monounsaturated monoglycerides. Required for efficient degradation of MAG, short-lived intermediates of glycerolipid metabolism which may also function as lipid signaling molecules. Controls inactivation of the signaling lipid N-palmitoylethanolamine (PEA). Involved in fatty acid ethyl ester (FAEE) catabolism. FAEEs are non-oxidative metabolites of ethanol that are transiently incorporated into lipid droplets (LDs). Their mobilization by LD-resident FAEE hydrolases facilitates a controlled metabolism of these potentially toxic lipid metabolites. This Saccharomyces cerevisiae (strain ATCC 204508 / S288c) (Baker's yeast) protein is Monoglyceride lipase (YJU3).